A 450-amino-acid polypeptide reads, in one-letter code: tRNA modification GTPase MnmE (450 aa).

Lys21, Glu78, and Lys117 together coordinate (6S)-5-formyl-5,6,7,8-tetrahydrofolate. The 164-residue stretch at 213 to 376 (GHALSIIGKP…LSQKISAFFP (164 aa)) folds into the TrmE-type G domain. Asn223 contacts K(+). Residues 223-228 (NAGKSS), 242-248 (SDIKGTT), and 267-270 (DTAG) each bind GTP. Position 227 (Ser227) interacts with Mg(2+). The K(+) site is built by Ser242, Ile244, and Thr247. Thr248 serves as a coordination point for Mg(2+). Residue Lys450 coordinates (6S)-5-formyl-5,6,7,8-tetrahydrofolate.

It belongs to the TRAFAC class TrmE-Era-EngA-EngB-Septin-like GTPase superfamily. TrmE GTPase family. In terms of assembly, homodimer. Heterotetramer of two MnmE and two MnmG subunits. Requires K(+) as cofactor.

It localises to the cytoplasm. Exhibits a very high intrinsic GTPase hydrolysis rate. Involved in the addition of a carboxymethylaminomethyl (cmnm) group at the wobble position (U34) of certain tRNAs, forming tRNA-cmnm(5)s(2)U34. The sequence is that of tRNA modification GTPase MnmE from Helicobacter acinonychis (strain Sheeba).